The primary structure comprises 442 residues: D-galactonate dehydratase family member SSBG_02010 (442 aa).

Position 246 (Asp-246) interacts with Mg(2+). D-arabinonate is bound at residue His-248. Positions 272 and 298 each coordinate Mg(2+). Glu-298, Arg-319, His-348, and Glu-375 together coordinate D-arabinonate.

The protein belongs to the mandelate racemase/muconate lactonizing enzyme family. GalD subfamily.

Its function is as follows. Has no detectable activity with D-mannonate and with a panel of 70 other acid sugars (in vitro), in spite of the conservation of the residues that are expected to be important for catalytic activity and cofactor binding. May have evolved a divergent function. The chain is D-galactonate dehydratase family member SSBG_02010 from Streptomyces sp. (strain SPB074).